The chain runs to 226 residues: MSVSVYLLDIEGTVCPISFVKETLFPYFSAKLPSLVKSDDVSIKSVLAQFPQHGDSQALQTHIQSLVSNDVKDPTLKQLQGTVWSQGYTSGEIKAPVYKDAIEFMKRKENVYIYSSGSVQAQKLLFGHVANPDNSGSNESSLDLNPLIKGYFDINTSGKKLESSSYEKIVTQIGVAAEQVLFISDNVKELEAAHAAGVKTLLAIRPGNPPVQENHGFRTVEKFDSL.

Residues Asp-9 and Glu-11 each coordinate Mg(2+). Residues 115 to 116 (SS) and Lys-160 contribute to the substrate site. Asp-185 lines the Mg(2+) pocket.

The protein belongs to the HAD-like hydrolase superfamily. MasA/MtnC family. Monomer. Requires Mg(2+) as cofactor.

It localises to the cytoplasm. It is found in the nucleus. The enzyme catalyses 5-methylsulfanyl-2,3-dioxopentyl phosphate + H2O = 1,2-dihydroxy-5-(methylsulfanyl)pent-1-en-3-one + phosphate. Its pathway is amino-acid biosynthesis; L-methionine biosynthesis via salvage pathway; L-methionine from S-methyl-5-thio-alpha-D-ribose 1-phosphate: step 3/6. It participates in amino-acid biosynthesis; L-methionine biosynthesis via salvage pathway; L-methionine from S-methyl-5-thio-alpha-D-ribose 1-phosphate: step 4/6. Bifunctional enzyme that catalyzes the enolization of 2,3-diketo-5-methylthiopentyl-1-phosphate (DK-MTP-1-P) into the intermediate 2-hydroxy-3-keto-5-methylthiopentenyl-1-phosphate (HK-MTPenyl-1-P), which is then dephosphorylated to form the acireductone 1,2-dihydroxy-3-keto-5-methylthiopentene (DHK-MTPene). This chain is Enolase-phosphatase E1, found in Zygosaccharomyces rouxii (strain ATCC 2623 / CBS 732 / NBRC 1130 / NCYC 568 / NRRL Y-229).